Here is a 210-residue protein sequence, read N- to C-terminus: 3,4-dihydroxy-2-butanone 4-phosphate synthase (210 aa).

D-ribulose 5-phosphate is bound by residues 33–34 (RE), Asp38, 146–150 (RRGHT), and Glu170. Glu34 lines the Mg(2+) pocket. His149 serves as a coordination point for Mg(2+).

Belongs to the DHBP synthase family. As to quaternary structure, homodimer. Requires Mg(2+) as cofactor. Mn(2+) is required as a cofactor.

The catalysed reaction is D-ribulose 5-phosphate = (2S)-2-hydroxy-3-oxobutyl phosphate + formate + H(+). It participates in cofactor biosynthesis; riboflavin biosynthesis; 2-hydroxy-3-oxobutyl phosphate from D-ribulose 5-phosphate: step 1/1. In terms of biological role, catalyzes the conversion of D-ribulose 5-phosphate to formate and 3,4-dihydroxy-2-butanone 4-phosphate. The sequence is that of 3,4-dihydroxy-2-butanone 4-phosphate synthase from Chromobacterium violaceum (strain ATCC 12472 / DSM 30191 / JCM 1249 / CCUG 213 / NBRC 12614 / NCIMB 9131 / NCTC 9757 / MK).